The sequence spans 331 residues: Lipoyl synthase (331 aa).

The interval 1 to 33 (MSDALIASSSEAPQSPAEQYDPTRKQKSADKTA) is disordered. Positions 7–19 (ASSSEAPQSPAEQ) are enriched in low complexity. Residues 21–33 (DPTRKQKSADKTA) show a composition bias toward basic and acidic residues. 7 residues coordinate [4Fe-4S] cluster: Cys78, Cys83, Cys89, Cys104, Cys108, Cys111, and Ser318. The Radical SAM core domain maps to 89–307 (CFGKGTATFM…EEEAYKMGFT (219 aa)).

Belongs to the radical SAM superfamily. Lipoyl synthase family. [4Fe-4S] cluster is required as a cofactor.

It localises to the cytoplasm. The catalysed reaction is [[Fe-S] cluster scaffold protein carrying a second [4Fe-4S](2+) cluster] + N(6)-octanoyl-L-lysyl-[protein] + 2 oxidized [2Fe-2S]-[ferredoxin] + 2 S-adenosyl-L-methionine + 4 H(+) = [[Fe-S] cluster scaffold protein] + N(6)-[(R)-dihydrolipoyl]-L-lysyl-[protein] + 4 Fe(3+) + 2 hydrogen sulfide + 2 5'-deoxyadenosine + 2 L-methionine + 2 reduced [2Fe-2S]-[ferredoxin]. It functions in the pathway protein modification; protein lipoylation via endogenous pathway; protein N(6)-(lipoyl)lysine from octanoyl-[acyl-carrier-protein]: step 2/2. Functionally, catalyzes the radical-mediated insertion of two sulfur atoms into the C-6 and C-8 positions of the octanoyl moiety bound to the lipoyl domains of lipoate-dependent enzymes, thereby converting the octanoylated domains into lipoylated derivatives. The chain is Lipoyl synthase from Cupriavidus pinatubonensis (strain JMP 134 / LMG 1197) (Cupriavidus necator (strain JMP 134)).